The chain runs to 284 residues: RNA polymerase sigma factor RpoH (284 aa).

The tract at residues 54 to 123 (MVLAHLRFVV…IHEFILRNWR (70 aa)) is sigma-70 factor domain-2. The short motif at 78 to 81 (DLIQ) is the Interaction with polymerase core subunit RpoC element. Residues 229–280 (ALEGLDERSRDILQQRWLSEEKATLHDLAEKYNVSAERIRQLEKNAMSKLKG) are sigma-70 factor domain-4. A DNA-binding region (H-T-H motif) is located at residues 253 to 272 (LHDLAEKYNVSAERIRQLEK).

Belongs to the sigma-70 factor family. RpoH subfamily. In terms of assembly, interacts with the RNA polymerase core enzyme.

The protein localises to the cytoplasm. Sigma factors are initiation factors that promote the attachment of RNA polymerase to specific initiation sites and are then released. This sigma factor is involved in regulation of expression of heat shock genes. The sequence is that of RNA polymerase sigma factor RpoH from Pseudomonas aeruginosa (strain ATCC 15692 / DSM 22644 / CIP 104116 / JCM 14847 / LMG 12228 / 1C / PRS 101 / PAO1).